Reading from the N-terminus, the 507-residue chain is ATP synthase subunit alpha, chloroplastic (507 aa).

170–177 contacts ATP; the sequence is GDRQTGKT.

The protein belongs to the ATPase alpha/beta chains family. F-type ATPases have 2 components, CF(1) - the catalytic core - and CF(0) - the membrane proton channel. CF(1) has five subunits: alpha(3), beta(3), gamma(1), delta(1), epsilon(1). CF(0) has four main subunits: a, b, b' and c.

It localises to the plastid. The protein resides in the chloroplast thylakoid membrane. The enzyme catalyses ATP + H2O + 4 H(+)(in) = ADP + phosphate + 5 H(+)(out). Functionally, produces ATP from ADP in the presence of a proton gradient across the membrane. The alpha chain is a regulatory subunit. This chain is ATP synthase subunit alpha, chloroplastic, found in Solanum bulbocastanum (Wild potato).